The chain runs to 187 residues: MIDRNGYRANVGIILLNSKSQVFWGKRARQNSWQFPQGGIKSGETPTQAMYRELAEETGLQPVHVEILGRTREWLRYDVPACWTRRDWRKNYRGQKQIWFLLRMLGRDCDVSLKTCAHPEFDAWRWNQYWVELESVVEFKRQVYRLALTELSRLLDHETCLGNDQAYREPLEPVKELEEKSSDARQG.

One can recognise a Nudix hydrolase domain in the interval 6–149; the sequence is GYRANVGIIL…KRQVYRLALT (144 aa). Positions 38 to 59 match the Nudix box motif; the sequence is GGIKSGETPTQAMYRELAEETG.

The protein belongs to the Nudix hydrolase family. RppH subfamily. It depends on a divalent metal cation as a cofactor.

Accelerates the degradation of transcripts by removing pyrophosphate from the 5'-end of triphosphorylated RNA, leading to a more labile monophosphorylated state that can stimulate subsequent ribonuclease cleavage. The polypeptide is RNA pyrophosphohydrolase (Nitrosomonas eutropha (strain DSM 101675 / C91 / Nm57)).